The chain runs to 472 residues: Fumarate hydratase class II (472 aa).

The disordered stretch occupies residues 1–20; sequence MSPHENPSVETRTESDTFGP. Residues 105–107, 136–139, 146–148, and threonine 194 contribute to the substrate site; these read SGT, HPND, and SSN. The tract at residues 127–149 is disordered; sequence GKRGGKSPVHPNDHCNRGQSSND. Histidine 195 functions as the Proton donor/acceptor in the catalytic mechanism. Serine 325 is a catalytic residue. Substrate-binding positions include serine 326 and 331–333; that span reads KVN.

This sequence belongs to the class-II fumarase/aspartase family. Fumarase subfamily. In terms of assembly, homotetramer.

It is found in the cytoplasm. The catalysed reaction is (S)-malate = fumarate + H2O. The protein operates within carbohydrate metabolism; tricarboxylic acid cycle; (S)-malate from fumarate: step 1/1. Its function is as follows. Involved in the TCA cycle. Catalyzes the stereospecific interconversion of fumarate to L-malate. The polypeptide is Fumarate hydratase class II (Methylorubrum extorquens (strain ATCC 14718 / DSM 1338 / JCM 2805 / NCIMB 9133 / AM1) (Methylobacterium extorquens)).